The sequence spans 356 residues: MRRELLLEKIETYKAIMPWYVLDYYQSKLAVPYSFTTLYEYLKEYKRFFDWLMDADLTQAPKIADIDLSTLEHLTKNDLEAFVLYLRERPSLNTYSTKEGLSQTTINRTLSALSSLYKYLTEEVENDQGEPYFYRNVMKKVSTKKKKETLASRAENIKQKLFLGDETLAFLDYVDKEYEQKLSNRAKSSFRKNKERDLAIISLLLASGVRLSEAVNLDLKDVNLNMMIIEVIRKGGKRDSVNVAGFAKGYLESYLAVRQRRYKAEKQDLAFFLTEYRGVPNRMDASSIEKMVGKYSEDFKIRVTPHKLRHTLATRLYDATKSQVLVSHQLGHSSTQVTDLYTHIVNDEQKNALDNL.

The Core-binding (CB) domain occupies isoleucine 16–threonine 121. In terms of domain architecture, Tyr recombinase spans alanine 169 to aspartate 354. Catalysis depends on residues arginine 210, lysine 234, histidine 306, arginine 309, and histidine 332. Tyrosine 341 acts as the O-(3'-phospho-DNA)-tyrosine intermediate in catalysis.

The protein belongs to the 'phage' integrase family. XerS subfamily.

The protein localises to the cytoplasm. With respect to regulation, ftsK is required for recombination. Functionally, site-specific tyrosine recombinase, which acts by catalyzing the cutting and rejoining of the recombining DNA molecules. Essential to convert dimers of the bacterial chromosome into monomers to permit their segregation at cell division. This chain is Tyrosine recombinase XerS, found in Streptococcus pyogenes serotype M5 (strain Manfredo).